Reading from the N-terminus, the 23-residue chain is Alpha-amanitin proprotein (23 aa).

Isoleucine 1 carries the post-translational modification (3R,4R)-4,5-dihydroxyisoleucine; in form alpha-amanitin. Isoleucine 1 carries the post-translational modification (3R,4S)-4-hydroxyisoleucine; in form gamma-amanitin. A cross-link (cyclopeptide (Ile-Pro)) is located at residues 1 to 8; the sequence is IWGIGCNP. Residues 2-6 constitute a cross-link (2'-cysteinyl-6'-hydroxytryptophan sulfoxide (Trp-Cys)); the sequence is WGIGC. Position 8 is a 4-hydroxyproline (proline 8). A propeptide spanning residues 9-23 is cleaved from the precursor; it reads CVGDEVTALITRGEA.

The protein belongs to the MSDIN fungal toxin family. Post-translationally, processed by the macrocyclase-peptidase enzyme POPB to yield a toxic cyclic decapeptide. POPB first removes 10 residues from the N-terminus. Conformational trapping of the remaining peptide forces the enzyme to release this intermediate rather than proceed to macrocyclization. The enzyme rebinds the remaining peptide in a different conformation and catalyzes macrocyclization of the N-terminal 8 residues.

Major toxin belonging to the bicyclic octapeptides amatoxins that acts by binding non-competitively to RNA polymerase II and greatly slowing the elongation of transcripts from target promoters. The protein is Alpha-amanitin proprotein of Amanita fuligineoides.